We begin with the raw amino-acid sequence, 494 residues long: Alpha-amylase-related protein (494 aa).

A signal peptide spans 1–20 (MIKFALALTLCLAGASLSLA). Glutamine 21 carries the pyrrolidone carboxylic acid modification. Cysteine 48 and cysteine 104 are oxidised to a cystine. 3 residues coordinate Ca(2+): asparagine 118, glutamine 169, and aspartate 178. A disulfide bridge links cysteine 157 with cysteine 171. Chloride is bound at residue arginine 206. Aspartate 208 (nucleophile) is an active-site residue. Histidine 212 lines the Ca(2+) pocket. The active-site Proton donor is the glutamate 245. Chloride-binding residues include asparagine 308 and arginine 343. 3 cysteine pairs are disulfide-bonded: cysteine 376–cysteine 382, cysteine 418–cysteine 441, and cysteine 448–cysteine 460.

Belongs to the glycosyl hydrolase 13 family. Monomer. It depends on Ca(2+) as a cofactor. Requires chloride as cofactor.

It is found in the secreted. It catalyses the reaction Endohydrolysis of (1-&gt;4)-alpha-D-glucosidic linkages in polysaccharides containing three or more (1-&gt;4)-alpha-linked D-glucose units.. This chain is Alpha-amylase-related protein (Amyrel), found in Drosophila jambulina (Fruit fly).